We begin with the raw amino-acid sequence, 420 residues long: Tryptophan--tRNA ligase (420 aa).

The short motif at 72 to 80 is the 'HIGH' region element; that stretch reads PSGLPHFGH. Positions 308 to 312 match the 'KMSKS' region motif; the sequence is KMSSS.

The protein belongs to the class-I aminoacyl-tRNA synthetase family.

It is found in the cytoplasm. The enzyme catalyses tRNA(Trp) + L-tryptophan + ATP = L-tryptophyl-tRNA(Trp) + AMP + diphosphate + H(+). This Archaeoglobus fulgidus (strain ATCC 49558 / DSM 4304 / JCM 9628 / NBRC 100126 / VC-16) protein is Tryptophan--tRNA ligase.